Consider the following 601-residue polypeptide: Potassium channel KAT2 (601 aa).

The Cytoplasmic segment spans residues 1–42 (METISNIFHNDPLPPLGARANQSIKLRKFIISPYDSRYRTWE). The helical transmembrane segment at 43 to 63 (TFLLVLVVYSAWICPFELAYL) threads the bilayer. Residues 64–71 (RNLSWKVS) lie on the Extracellular side of the membrane. The helical transmembrane segment at 72 to 92 (LVDNIIDSFFAIDIILTFFLA) threads the bilayer. The Cytoplasmic segment spans residues 93 to 112 (YLDQKSYLLVDDPKRIVARY). Residues 113–133 (FSSWFLFDVCSTIPYQLLGQI) traverse the membrane as a helical segment. Residues 134-144 (FKKHENGLAYR) are Extracellular-facing. The helical; Voltage-sensor transmembrane segment at 145-165 (LLSMLRLWRLRRLSELFARLE) threads the bilayer. Over 166–179 (KDIRLNYYWIRCTK) the chain is Cytoplasmic. Residues 180–200 (LISVTLFAVHCSGCFNYLIAD) traverse the membrane as a helical segment. The Extracellular segment spans residues 201 to 227 (RYPNPARTWIGAAIPNYRSQNLWVRYV). The pore-forming intramembrane region spans 228–247 (TAIYWSITTLTTTGYGDLHA). The Extracellular portion of the chain corresponds to 248–251 (ENQR). A helical transmembrane segment spans residues 252–272 (EMLFSICYMLFNLGLTAYLIG). At 273–601 (NMTNLVVQGS…DGDHLFFMEI (329 aa)) the chain is on the cytoplasmic side. 356 to 475 (LFHGVSFTCM…RVILNNLSQK (120 aa)) serves as a coordination point for a nucleoside 3',5'-cyclic phosphate. Residues 530–601 (RVTIHMYSQR…DGDHLFFMEI (72 aa)) form the KHA domain.

Belongs to the potassium channel family. Plant (TC 1.A.1.4) subfamily.

The protein resides in the membrane. Probable inward-rectifying potassium channel. Assuming opened or closed conformations in response to the voltage difference across the membrane, the channel is activated by hyperpolarization. This Oryza sativa subsp. japonica (Rice) protein is Potassium channel KAT2.